Consider the following 91-residue polypeptide: CRISPR-associated endoribonuclease Cas2 (91 aa).

Residue D14 coordinates Mg(2+).

It belongs to the CRISPR-associated endoribonuclease Cas2 protein family. In terms of assembly, homodimer, forms a heterotetramer with a Cas1 homodimer. Mg(2+) serves as cofactor.

In terms of biological role, CRISPR (clustered regularly interspaced short palindromic repeat), is an adaptive immune system that provides protection against mobile genetic elements (viruses, transposable elements and conjugative plasmids). CRISPR clusters contain sequences complementary to antecedent mobile elements and target invading nucleic acids. CRISPR clusters are transcribed and processed into CRISPR RNA (crRNA). Functions as a ssRNA-specific endoribonuclease. Involved in the integration of spacer DNA into the CRISPR cassette. The polypeptide is CRISPR-associated endoribonuclease Cas2 (Nanoarchaeum equitans (strain Kin4-M)).